Consider the following 197-residue polypeptide: Penicillin-binding protein activator LpoB (197 aa).

Positions 1–17 are cleaved as a signal peptide; it reads MIKRMSGIALAALLLSG. Cysteine 18 carries N-palmitoyl cysteine lipidation. Cysteine 18 carries the S-diacylglycerol cysteine lipid modification. Positions 23–57 are disordered; it reads PRGETPSQPPAPTTPAKPSVVPTPTPPVVTPVPQP. Residues 29 to 57 show a composition bias toward pro residues; the sequence is SQPPAPTTPAKPSVVPTPTPPVVTPVPQP.

The protein belongs to the LpoB family. As to quaternary structure, interacts with PBP1b.

The protein localises to the cell outer membrane. Functionally, regulator of peptidoglycan synthesis that is essential for the function of penicillin-binding protein 1B (PBP1b). The sequence is that of Penicillin-binding protein activator LpoB from Edwardsiella piscicida.